Consider the following 225-residue polypeptide: Sirohydrochlorin ferrochelatase, chloroplastic (225 aa).

A chloroplast-targeting transit peptide spans 1–46 (MTTQSQFLVNLSYGGLASQSNLRANNRVSPSSCQITRTNRSWALPV). Positions 89 and 155 each coordinate Fe cation. Cysteine 199, cysteine 210, cysteine 213, and cysteine 219 together coordinate [4Fe-4S] cluster.

It belongs to the CbiX family. SirB subfamily. In terms of assembly, homodimer. It depends on [4Fe-4S] cluster as a cofactor.

Its subcellular location is the plastid. It is found in the chloroplast. It carries out the reaction siroheme + 2 H(+) = sirohydrochlorin + Fe(2+). It participates in porphyrin-containing compound metabolism; siroheme biosynthesis; siroheme from sirohydrochlorin: step 1/1. Its function is as follows. Chelates iron to the siroheme precursor. Catalyzes the last step of the siroheme biosynthesis. Unlike its counterparts in bacteria, contains an [Fe-S] cluster which is not involved directly in the enzymatic reaction, but may play regulatory role in iron, sulfur and tetrapyrrole metabolism. The [Fe-S] cluster is required for normal plant growth. The chain is Sirohydrochlorin ferrochelatase, chloroplastic from Arabidopsis thaliana (Mouse-ear cress).